The primary structure comprises 2358 residues: MRNKNILVLNLILSIPRLVFTAKYDERESLWNLNQNQSATDPLDYWGKWENHQYHPSPDDWQVPFYTVILDKWKDGDPRNNEANNTIYEYDIYETGFRNGGDIIGLKDSLDYLEIMGIKVIYIAGTPFLNQPWGADQYSPLDYTILDHHSGTIAQWRDTIEEIHRRGFYLVLDLTISTLGDLIGFRKYLNSTTPFSLFEHEAVWKSNVIYPDWNFTNKYDPKCELPRFWGEDGAPVVIDYVGCYDSDFDQYGDTEAFGTHPDWERQLSKFASVQDRLREWRPSVSEKLKHFACMIIAMLDVDGFRIDKATQITVDFLASWAHSVRGCAATFNKKNFFIPGEVTGSSSYGSIYYGRGRQPDQRPPSILTSLNSSSLKENYFLREPKANALDASAFHYSLYRAMTRFLQMDGDLQVGHDLPVDFTDLWNAMAVNEDFYNPNTHKVDPRHMLGITNHDVFRWSAIEFGLERLLLGTMITYFLFPGAPSIYYGDEQGFYVLDNTANNYLYGRQAMPSSIAWKVHGCYALASDQYPELPVIKAYQGCNDDWNIMDHFDFAKPELKMFKIFNFIREQYPALKSGWKSVKLRNWTEYVHFPNSGKTPTEVGVWSIVRGALETLQNFDARNNTAWNGDIWILYTNQNRTTTLDYQCSSSNSVVSPYASGLTLKNLIYPFEEYILQESNKYSSNLKSYYGCIPNIEFPPWGFKILIPKKYYVRYPPQITSFNPQHDSRIYNHNGKQKLVISFTETMDCNEITSKLQFSSKTESGKVMKVDKETVKCSVSNNSADSYYFGLAPARFHWSGDLINIADGIHEIKLQRVHSQDHQSMSDSMYKLLLRFGKLDNPMVFSTANRSSSILSQENEKLYINHKAPGADLFRFSFDYGLHWSEWIDYLSNKTECTEFANNISLKTWKGHHVIVQYWSRLTASANYIQEGGLGSLSSFPHLYMNGPYNQWGFDSGIPNRLIYKNCSWHKTFISDVFPTKFQFNVYNFDESGMPDQKKVYGTIGNSTVLVRLPPSELKESVTWIKEAPPSNFLTWEIIISDLTRTYHLIPRGSSTVSIILFSLFLVSPLICALATMLAFQKFFYQVRLNKGIEKKQEWKEKLLGPFSRISQSNINQGFSHQVALNNSVKSVHPKISRKLILVATLEYDIPDWDIKIKIGGLGVMAELMGKHLTHHDLIWVVPRVGDVNYPDGQELAPLEVVVLDQVYEVRVYSHNLRNITYILLEAPVFRKQTSAEPYPARMDDLSSAIFYSAWNQCIAGIIRRYPIDVYHINDYHGALAPCYLLPNVIPCVLSLHNAEFQGLWPLRTQAEKNEVCAVYNISTKICTKYIQFGNVFNLLHAGVSYIRIHQKGYGVVGVSNKYGKRSKARYPIFWGLKKVGKLPNPDPLDTAQLDDPTNITEEITIDLTAEAEKRAFKRDAQKWTNLELDDSADLLVFVGRWSMQKGIDLIADIAPTLLQDFNAQLITIGPIIDLYGKFAAEKLNALMKKYPKRVYCRPEFTHLPPCIFSGADFVLIPSRDEPFGLVAVEFGRKGALGIGARVGGLGQMPGWWYSVESNATSHVLQQFEEACRKALSSSAEKRALLRAKSAKQRFPVLEWISKLDHLMDNCIRLNVGQRQQGSSSHSMKFRSKNDLSSIKLSTKEGLENEENELKDKAPPNEPNVGSLFLFNKSSMGSVGGPGHYKATDLSQELETNDQDIEYNEFYSQLDTSTSDIFQDTSVDGFPDLQVSSDINVRNDRLSSFVMSSEDLRSSDGHPENSDSVLETISSVHHRSPINQVVRNLNESQLSLDSVISMNLNKEFALTKTENDFTDDNGRALNYFSQKLEELDPKNSVNELCIETFILKMKKEWYDGLRNIRFGIQRPNLLIYDEDKKFINTEHFLGSKVNLNSVTSLGNFNGSSPNSFLFLLKNRTMRIKCFMQMRIGDWPVYSIFLSVGQILAATSYQLVLLSGSSAQFSTQLYIVGSIYTVSSVFWWYLYRMLPSVASLSLPFLLYCASFLLIGISSFINENMYLRLWISHIASWIYAVASASGSLYFSLNFGDEAGAGVVSWIVRACIVQGFQQIWACCLWYWGSYIDRSMQECHSFPHEVYPLGLIAVFSWPLALVMLLFAILLIFGLPDYYWESPGNIPAFYTALLRRKLVLWFFVATILQNYWLSTLYGRSWKYLWGGSLLAPWKMLTIAFFLFLSMWIIMLMFLGRKSLTHSWLLPVFGVGLGSPRWLQMMWGTSNIGVYLPWAGVAGPIVGRILWIWLGVLDSVQGVGVGMILLQTLTRRHIATTLIAGQIIGTLTSMLARATAPNRLGPGLVFLDLTSWRFEDGAKIFRSAPFWICLISQIAVSAGYLLFFRRENLSRP.

Residues 1645-1659 (EGLENEENELKDKAP) are compositionally biased toward basic and acidic residues. Residues 1645–1669 (EGLENEENELKDKAPPNEPNVGSLF) form a disordered region.

Belongs to the glycosyltransferase group 1 family.

It catalyses the reaction [(1-&gt;3)-alpha-D-glucosyl](n) + UDP-alpha-D-glucose = [(1-&gt;3)-alpha-D-glucosyl](n+1) + UDP + H(+). The polypeptide is Cell wall alpha-1,3-glucan synthase mok13 (mok13) (Schizosaccharomyces pombe (strain 972 / ATCC 24843) (Fission yeast)).